A 68-amino-acid polypeptide reads, in one-letter code: Prokaryotic ubiquitin-like protein Pup (68 aa).

The interval 1–37 (MAQERIFGTGSRREDEPDTPAPVDPPVSGAAQAQRDM) is disordered. Residues 24–62 (DPPVSGAAQAQRDMQGTDDLLAEIDGVLETNAEAFVKGF) form an ARC ATPase binding region. Deamidated glutamine is present on Gln-68. An Isoglutamyl lysine isopeptide (Gln-Lys) (interchain with K-? in acceptor proteins) cross-link involves residue Gln-68.

This sequence belongs to the prokaryotic ubiquitin-like protein family. As to quaternary structure, strongly interacts with the proteasome-associated ATPase ARC through a hydrophobic interface; the interacting region of Pup lies in its C-terminal half. There is one Pup binding site per ARC hexamer ring. Post-translationally, is modified by deamidation of its C-terminal glutamine to glutamate by the deamidase Dop, a prerequisite to the subsequent pupylation process.

Its pathway is protein degradation; proteasomal Pup-dependent pathway. Its function is as follows. Protein modifier that is covalently attached to lysine residues of substrate proteins, thereby targeting them for proteasomal degradation. The tagging system is termed pupylation. The protein is Prokaryotic ubiquitin-like protein Pup of Kocuria rhizophila (strain ATCC 9341 / DSM 348 / NBRC 103217 / DC2201).